The primary structure comprises 272 residues: Shikimate dehydrogenase (NADP(+)) (272 aa).

Residues 14-16 (SKS) and threonine 61 contribute to the shikimate site. Lysine 65 serves as the catalytic Proton acceptor. Glutamate 77 serves as a coordination point for NADP(+). Shikimate is bound by residues asparagine 86 and aspartate 102. NADP(+) contacts are provided by residues 126-130 (GAGGA), 149-154 (NRTVSR), and methionine 213. Tyrosine 215 serves as a coordination point for shikimate. Glycine 237 provides a ligand contact to NADP(+).

The protein belongs to the shikimate dehydrogenase family. In terms of assembly, homodimer.

It catalyses the reaction shikimate + NADP(+) = 3-dehydroshikimate + NADPH + H(+). The protein operates within metabolic intermediate biosynthesis; chorismate biosynthesis; chorismate from D-erythrose 4-phosphate and phosphoenolpyruvate: step 4/7. Functionally, involved in the biosynthesis of the chorismate, which leads to the biosynthesis of aromatic amino acids. Catalyzes the reversible NADPH linked reduction of 3-dehydroshikimate (DHSA) to yield shikimate (SA). This chain is Shikimate dehydrogenase (NADP(+)), found in Shigella flexneri serotype 5b (strain 8401).